The primary structure comprises 476 residues: Calcium/calmodulin-dependent protein kinase type 1G (476 aa).

In terms of domain architecture, Protein kinase spans 23–277; it reads FIFMEVLGSG…CEKALSHPWI (255 aa). Residues 29-37 and Lys52 each bind ATP; that span reads LGSGAFSEV. Asp143 acts as the Proton acceptor in catalysis. An autoinhibitory domain region spans residues 277–317; the sequence is IDGNTALHRDIYPSVSLQIQKNFAKSKWRQAFNAAAVVHHM. The tract at residues 297 to 318 is calmodulin-binding; the sequence is KNFAKSKWRQAFNAAAVVHHMR. A disordered region spans residues 325 to 352; that stretch reads HSPGVRPEVENRPPETQASETSRPSSPE. The segment covering 338–352 has biased composition (polar residues); that stretch reads PETQASETSRPSSPE.

The protein belongs to the protein kinase superfamily. CAMK Ser/Thr protein kinase family. CaMK subfamily. Post-translationally, may be prenylated on Cys-473. In terms of tissue distribution, mainly expressed in brain with small amounts in skeletal muscles, kidney, spleen and liver. Strongly expressed in forebrain neocortex, striatum and limbic system.

It localises to the cytoplasm. The protein resides in the golgi apparatus membrane. Its subcellular location is the cell membrane. The enzyme catalyses L-seryl-[protein] + ATP = O-phospho-L-seryl-[protein] + ADP + H(+). It catalyses the reaction L-threonyl-[protein] + ATP = O-phospho-L-threonyl-[protein] + ADP + H(+). Activated by Ca(2+)/calmodulin. Binding of calmodulin is thought to result in a conformational change and leads to activation through phosphorylation by CAMKK1. In terms of biological role, calcium/calmodulin-dependent protein kinase belonging to a proposed calcium-triggered signaling cascade. In vitro phosphorylates transcription factor CREB1. The sequence is that of Calcium/calmodulin-dependent protein kinase type 1G (CAMK1G) from Homo sapiens (Human).